Consider the following 359-residue polypeptide: Membrane-bound lytic murein transglycosylase C (359 aa).

A signal peptide spans 1 to 16 (MKKYLALALIAPLLIS). Cys-17 carries N-palmitoyl cysteine lipidation. Cys-17 carries S-diacylglycerol cysteine lipidation.

This sequence belongs to the transglycosylase Slt family.

It localises to the cell outer membrane. It carries out the reaction Exolytic cleavage of the (1-&gt;4)-beta-glycosidic linkage between N-acetylmuramic acid (MurNAc) and N-acetylglucosamine (GlcNAc) residues in peptidoglycan, from either the reducing or the non-reducing ends of the peptidoglycan chains, with concomitant formation of a 1,6-anhydrobond in the MurNAc residue.. Its function is as follows. Murein-degrading enzyme. May play a role in recycling of muropeptides during cell elongation and/or cell division. The protein is Membrane-bound lytic murein transglycosylase C of Escherichia coli O139:H28 (strain E24377A / ETEC).